The sequence spans 765 residues: FHF complex subunit HOOK interacting protein 2A (765 aa).

Composition is skewed to polar residues over residues 200–209 and 538–550; these read LSTDTGQSCQ and NTLS…SSSP. Disordered regions lie at residues 200-234 and 538-562; these read LSTD…QMGD and NTLS…TDGK.

It belongs to the FHIP family.

May be required for proper functioning of the nervous system. The protein is FHF complex subunit HOOK interacting protein 2A (FHIP2A) of Bos taurus (Bovine).